We begin with the raw amino-acid sequence, 475 residues long: Retrotransposon Gag-like protein 3 (475 aa).

Composition is skewed to basic and acidic residues over residues 51 to 66 (LLRKSSEAKEPQKLPE) and 78 to 87 (KTPEFKEPQK). Disordered stretches follow at residues 51–101 (LLRK…EPPA), 152–173 (EPKNSEPQDPPNIEKPQEAPEY), and 397–421 (DPNPLGKSSSAEGDGPESPPAENQP). The segment at 443–462 (RLCLYCGYPGHFARDCPVKP) adopts a CCHC-type zinc-finger fold.

The protein resides in the nucleus. In terms of biological role, may function as a transcriptional regulator. Plays a role in postnatal myogenesis, may be involved in the regulation of satellite cells self-renewal. The sequence is that of Retrotransposon Gag-like protein 3 from Homo sapiens (Human).